The chain runs to 508 residues: Pyruvate kinase (508 aa).

R56 contacts substrate. The K(+) site is built by N58, S60, D90, and T91. Residue 58 to 61 participates in ATP binding; that stretch reads NFSH. R97 and K185 together coordinate ATP. E251 serves as a coordination point for Mg(2+). Residues G274, D275, and T307 each coordinate substrate. D275 provides a ligand contact to Mg(2+).

The protein belongs to the pyruvate kinase family. In terms of assembly, homotetramer. It depends on Mg(2+) as a cofactor. Requires K(+) as cofactor.

The enzyme catalyses pyruvate + ATP = phosphoenolpyruvate + ADP + H(+). Its pathway is carbohydrate degradation; glycolysis; pyruvate from D-glyceraldehyde 3-phosphate: step 5/5. Its activity is regulated as follows. Regulated by phosphoenolpyruvate substrate and is allosterically activated by ribose-5-phosphate, AMP and other nucleoside monophosphates but not by fructose-1,6-bisphosphate. This chain is Pyruvate kinase (pyk), found in Mycoplasma pneumoniae (strain ATCC 29342 / M129 / Subtype 1) (Mycoplasmoides pneumoniae).